Consider the following 998-residue polypeptide: Mis18-binding protein 1 (998 aa).

Lysine 7 participates in a covalent cross-link: Glycyl lysine isopeptide (Lys-Gly) (interchain with G-Cter in SUMO2). A phosphoserine mark is found at serine 9, serine 109, and serine 134. Residues 122 to 153 (QRDKQEQLTRSSSMLGSPQGEHTKDFPPNTDK) form a disordered region. Residues 142-153 (EHTKDFPPNTDK) show a composition bias toward basic and acidic residues. Phosphoserine is present on residues serine 169 and serine 258. The region spanning 336 to 422 (VHLQEWMIKV…MFGFPHNWKE (87 aa)) is the SANTA domain. 2 disordered regions span residues 438-460 (KTRQ…AEDK) and 476-502 (DNSL…KERR). A compositionally biased stretch (polar residues) spans 488–497 (PLNSLEQPTS). Phosphothreonine occurs at positions 516 and 578. Serine 638 and serine 639 each carry phosphoserine. A disordered region spans residues 638–660 (SSEENEVEIKSRTRARNTKERLN). Over residues 644–660 (VEIKSRTRARNTKERLN) the composition is skewed to basic and acidic residues. Position 688 is a phosphothreonine (threonine 688). Lysine 707 participates in a covalent cross-link: Glycyl lysine isopeptide (Lys-Gly) (interchain with G-Cter in SUMO2). The residue at position 726 (serine 726) is a Phosphoserine. The SANT domain occupies 741 to 796 (TDDEEWSEQELQKLHCAFTSLPKHKPGFWSDVAMAVGSRTADECQKKYTEEPQGQG). Lysine 765 participates in a covalent cross-link: Glycyl lysine isopeptide (Lys-Gly) (interchain with G-Cter in SUMO2). The tract at residues 784–821 (CQKKYTEEPQGQGSRKHGSKKKQANKVQNGEKDSADAK) is disordered. The segment covering 797–807 (SRKHGSKKKQA) has biased composition (basic residues). Residues 812 to 821 (NGEKDSADAK) are compositionally biased toward basic and acidic residues. Residues lysine 821, lysine 828, and lysine 847 each participate in a glycyl lysine isopeptide (Lys-Gly) (interchain with G-Cter in SUMO2) cross-link. The residue at position 872 (serine 872) is a Phosphoserine. A Glycyl lysine isopeptide (Lys-Gly) (interchain with G-Cter in SUMO2) cross-link involves residue lysine 948. Phosphoserine occurs at positions 955 and 985. Residues 976–998 (SKYFIDDTESDEEEKDYYFSNSD) form a disordered region. Residues 981-990 (DDTESDEEEK) show a composition bias toward acidic residues.

Interacts with SP1. Interacts with MIS18A. Identified in a complex containing MIS18A, OIP5/MIS18B, MIS18BP1, RBBP7 and RBBP4. Interacts with KAT7/HBO1. Interacts (via N-terminus) with FLNA (via N-terminus).

Its subcellular location is the nucleus. It is found in the chromosome. The protein localises to the centromere. In terms of biological role, required for recruitment of CENPA to centromeres and normal chromosome segregation during mitosis. The protein is Mis18-binding protein 1 (Mis18bp1) of Mus musculus (Mouse).